We begin with the raw amino-acid sequence, 30 residues long: uncharacterized protein (30 aa).

This is an uncharacterized protein from Saccharomyces cerevisiae (strain ATCC 204508 / S288c) (Baker's yeast).